Consider the following 405-residue polypeptide: Imidazolonepropionase (405 aa).

Fe(3+) contacts are provided by H72 and H74. Residues H72 and H74 each coordinate Zn(2+). Residues R81, Y144, and H177 each contribute to the 4-imidazolone-5-propanoate site. Y144 is an N-formimidoyl-L-glutamate binding site. H242 is a Fe(3+) binding site. H242 contacts Zn(2+). Position 245 (Q245) interacts with 4-imidazolone-5-propanoate. D317 is a binding site for Fe(3+). D317 is a Zn(2+) binding site. N-formimidoyl-L-glutamate is bound by residues N319 and G321. T322 provides a ligand contact to 4-imidazolone-5-propanoate.

Belongs to the metallo-dependent hydrolases superfamily. HutI family. Zn(2+) serves as cofactor. It depends on Fe(3+) as a cofactor.

It localises to the cytoplasm. It carries out the reaction 4-imidazolone-5-propanoate + H2O = N-formimidoyl-L-glutamate. It participates in amino-acid degradation; L-histidine degradation into L-glutamate; N-formimidoyl-L-glutamate from L-histidine: step 3/3. Its function is as follows. Catalyzes the hydrolytic cleavage of the carbon-nitrogen bond in imidazolone-5-propanoate to yield N-formimidoyl-L-glutamate. It is the third step in the universal histidine degradation pathway. The sequence is that of Imidazolonepropionase from Erwinia tasmaniensis (strain DSM 17950 / CFBP 7177 / CIP 109463 / NCPPB 4357 / Et1/99).